The sequence spans 96 residues: Protein Vpr (96 aa).

The segment at 1–42 is homooligomerization; it reads MEQPPEDQGPQREPYNEWTLELLEELKNEAVRHFPREYLHGL. Phosphoserine; by host is present on residues Ser-79, Ser-94, and Ser-96.

This sequence belongs to the HIV-1 VPR protein family. Homooligomer, may form homodimer. Interacts with p6-gag region of the Pr55 Gag precursor protein through a (Leu-X-X)4 motif near the C-terminus of the P6gag protein. Interacts with host UNG. May interact with host RAD23A/HHR23A. Interacts with host VPRBP/DCAF1, leading to hijack the CUL4A-RBX1-DDB1-DCAF1/VPRBP complex, mediating ubiquitination of host proteins such as TERT and ZGPAT and arrest of the cell cycle in G2 phase. In terms of processing, phosphorylated on several residues by host. These phosphorylations regulate VPR activity for the nuclear import of the HIV-1 pre-integration complex.

It is found in the virion. It localises to the host nucleus. Its subcellular location is the host extracellular space. Functionally, during virus replication, may deplete host UNG protein, and incude G2-M cell cycle arrest. Acts by targeting specific host proteins for degradation by the 26S proteasome, through association with the cellular CUL4A-DDB1 E3 ligase complex by direct interaction with host VPRPB/DCAF-1. Cell cycle arrest reportedly occurs within hours of infection and is not blocked by antiviral agents, suggesting that it is initiated by the VPR carried into the virion. Additionally, VPR induces apoptosis in a cell cycle dependent manner suggesting that these two effects are mechanistically linked. Detected in the serum and cerebrospinal fluid of AIDS patient, VPR may also induce cell death to bystander cells. During virus entry, plays a role in the transport of the viral pre-integration (PIC) complex to the host nucleus. This function is crucial for viral infection of non-dividing macrophages. May act directly at the nuclear pore complex, by binding nucleoporins phenylalanine-glycine (FG)-repeat regions. The sequence is that of Protein Vpr from Homo sapiens (Human).